Consider the following 638-residue polypeptide: Threonine--tRNA ligase (638 aa).

One can recognise a TGS domain in the interval 1 to 61 (MPNIKLPDGS…ERDSELAILT (61 aa)). Residues 242–533 (DHRKLGRQLD…LIEHYAGAMP (292 aa)) form a catalytic region. The Zn(2+) site is built by C333, H384, and H510.

This sequence belongs to the class-II aminoacyl-tRNA synthetase family. As to quaternary structure, homodimer. The cofactor is Zn(2+).

It localises to the cytoplasm. The catalysed reaction is tRNA(Thr) + L-threonine + ATP = L-threonyl-tRNA(Thr) + AMP + diphosphate + H(+). Catalyzes the attachment of threonine to tRNA(Thr) in a two-step reaction: L-threonine is first activated by ATP to form Thr-AMP and then transferred to the acceptor end of tRNA(Thr). Also edits incorrectly charged L-seryl-tRNA(Thr). The sequence is that of Threonine--tRNA ligase from Azoarcus sp. (strain BH72).